A 234-amino-acid chain; its full sequence is Thiamine import ATP-binding protein ThiQ (234 aa).

In terms of domain architecture, ABC transporter spans 2-230 (LTLQQVHYYY…HSHPELVEFF (229 aa)). An ATP-binding site is contributed by 32 to 39 (GPSGAGKS).

Belongs to the ABC transporter superfamily. Thiamine importer (TC 3.A.1.19.1) family. As to quaternary structure, the complex is composed of two ATP-binding proteins (ThiQ), two transmembrane proteins (ThiP) and a solute-binding protein (ThiB).

The protein resides in the cell inner membrane. It catalyses the reaction thiamine(out) + ATP + H2O = thiamine(in) + ADP + phosphate + H(+). Its function is as follows. Part of the ABC transporter complex ThiBPQ involved in thiamine import. Responsible for energy coupling to the transport system. This chain is Thiamine import ATP-binding protein ThiQ, found in Vibrio vulnificus (strain CMCP6).